Consider the following 198-residue polypeptide: Ribonuclease 3-like protein 1 (198 aa).

Over residues 85-110 (KKLAPKPDEEHTTTTKPISKDDESKT) the composition is skewed to basic and acidic residues. Residues 85–115 (KKLAPKPDEEHTTTTKPISKDDESKTRRGSA) form a disordered region. The DRBM domain maps to 114–191 (SAKSVLHEMC…AEGALWYLEH (78 aa)).

The chain is Ribonuclease 3-like protein 1 (RTL1) from Arabidopsis thaliana (Mouse-ear cress).